A 130-amino-acid polypeptide reads, in one-letter code: Small ribosomal subunit protein uS8 (130 aa).

This sequence belongs to the universal ribosomal protein uS8 family. In terms of assembly, part of the 30S ribosomal subunit. Contacts proteins S5 and S12.

In terms of biological role, one of the primary rRNA binding proteins, it binds directly to 16S rRNA central domain where it helps coordinate assembly of the platform of the 30S subunit. This is Small ribosomal subunit protein uS8 from Shewanella sediminis (strain HAW-EB3).